The sequence spans 122 residues: Urease subunit beta (122 aa).

Belongs to the urease beta subunit family. As to quaternary structure, heterotrimer of UreA (gamma), UreB (beta) and UreC (alpha) subunits. Three heterotrimers associate to form the active enzyme.

It localises to the cytoplasm. The catalysed reaction is urea + 2 H2O + H(+) = hydrogencarbonate + 2 NH4(+). The protein operates within nitrogen metabolism; urea degradation; CO(2) and NH(3) from urea (urease route): step 1/1. This chain is Urease subunit beta, found in Flavobacterium johnsoniae (strain ATCC 17061 / DSM 2064 / JCM 8514 / BCRC 14874 / CCUG 350202 / NBRC 14942 / NCIMB 11054 / UW101) (Cytophaga johnsonae).